Here is a 169-residue protein sequence, read N- to C-terminus: S-ribosylhomocysteine lyase (169 aa).

Fe cation-binding residues include H54, H58, and C128.

This sequence belongs to the LuxS family. Homodimer. Fe cation is required as a cofactor.

The enzyme catalyses S-(5-deoxy-D-ribos-5-yl)-L-homocysteine = (S)-4,5-dihydroxypentane-2,3-dione + L-homocysteine. In terms of biological role, involved in the synthesis of autoinducer 2 (AI-2) which is secreted by bacteria and is used to communicate both the cell density and the metabolic potential of the environment. The regulation of gene expression in response to changes in cell density is called quorum sensing. Catalyzes the transformation of S-ribosylhomocysteine (RHC) to homocysteine (HC) and 4,5-dihydroxy-2,3-pentadione (DPD). The protein is S-ribosylhomocysteine lyase of Shewanella halifaxensis (strain HAW-EB4).